A 208-amino-acid chain; its full sequence is 3-isopropylmalate dehydratase small subunit 2 (208 aa).

Belongs to the LeuD family. LeuD type 1 subfamily. As to quaternary structure, heterodimer of LeuC and LeuD.

The enzyme catalyses (2R,3S)-3-isopropylmalate = (2S)-2-isopropylmalate. It participates in amino-acid biosynthesis; L-leucine biosynthesis; L-leucine from 3-methyl-2-oxobutanoate: step 2/4. In terms of biological role, catalyzes the isomerization between 2-isopropylmalate and 3-isopropylmalate, via the formation of 2-isopropylmaleate. This chain is 3-isopropylmalate dehydratase small subunit 2 (leuD2), found in Salmonella typhimurium (strain LT2 / SGSC1412 / ATCC 700720).